Reading from the N-terminus, the 278-residue chain is Pantothenate synthetase (278 aa).

26-33 lines the ATP pocket; sequence MGNLHEGH. Histidine 33 (proton donor) is an active-site residue. (R)-pantoate is bound at residue glutamine 57. Position 57 (glutamine 57) interacts with beta-alanine. 144-147 is a binding site for ATP; the sequence is GKKD. A (R)-pantoate-binding site is contributed by glutamine 150. ATP-binding positions include glycine 173 and 181 to 184; that span reads LSSR.

This sequence belongs to the pantothenate synthetase family. Homodimer.

The protein localises to the cytoplasm. It carries out the reaction (R)-pantoate + beta-alanine + ATP = (R)-pantothenate + AMP + diphosphate + H(+). Its pathway is cofactor biosynthesis; (R)-pantothenate biosynthesis; (R)-pantothenate from (R)-pantoate and beta-alanine: step 1/1. Functionally, catalyzes the condensation of pantoate with beta-alanine in an ATP-dependent reaction via a pantoyl-adenylate intermediate. The polypeptide is Pantothenate synthetase (Neisseria meningitidis serogroup A / serotype 4A (strain DSM 15465 / Z2491)).